Here is a 346-residue protein sequence, read N- to C-terminus: Holliday junction branch migration complex subunit RuvB (346 aa).

Positions 1–182 (MSEAARLIAP…FGIPVRLNFY (182 aa)) are large ATPase domain (RuvB-L). Residues Leu21, Arg22, Gly63, Lys66, Thr67, Thr68, 129–131 (EDF), Arg172, Tyr182, and Arg219 contribute to the ATP site. Thr67 contacts Mg(2+). Residues 183 to 253 (TVEELELIVR…IADEALTRLL (71 aa)) form a small ATPAse domain (RuvB-S) region. Residues 256–346 (SMGLDQLDRR…SQFRLTLEDD (91 aa)) form a head domain (RuvB-H) region. Residues Arg292, Arg311, and Arg316 each coordinate DNA.

It belongs to the RuvB family. As to quaternary structure, homohexamer. Forms an RuvA(8)-RuvB(12)-Holliday junction (HJ) complex. HJ DNA is sandwiched between 2 RuvA tetramers; dsDNA enters through RuvA and exits via RuvB. An RuvB hexamer assembles on each DNA strand where it exits the tetramer. Each RuvB hexamer is contacted by two RuvA subunits (via domain III) on 2 adjacent RuvB subunits; this complex drives branch migration. In the full resolvosome a probable DNA-RuvA(4)-RuvB(12)-RuvC(2) complex forms which resolves the HJ.

The protein resides in the cytoplasm. It carries out the reaction ATP + H2O = ADP + phosphate + H(+). Functionally, the RuvA-RuvB-RuvC complex processes Holliday junction (HJ) DNA during genetic recombination and DNA repair, while the RuvA-RuvB complex plays an important role in the rescue of blocked DNA replication forks via replication fork reversal (RFR). RuvA specifically binds to HJ cruciform DNA, conferring on it an open structure. The RuvB hexamer acts as an ATP-dependent pump, pulling dsDNA into and through the RuvAB complex. RuvB forms 2 homohexamers on either side of HJ DNA bound by 1 or 2 RuvA tetramers; 4 subunits per hexamer contact DNA at a time. Coordinated motions by a converter formed by DNA-disengaged RuvB subunits stimulates ATP hydrolysis and nucleotide exchange. Immobilization of the converter enables RuvB to convert the ATP-contained energy into a lever motion, pulling 2 nucleotides of DNA out of the RuvA tetramer per ATP hydrolyzed, thus driving DNA branch migration. The RuvB motors rotate together with the DNA substrate, which together with the progressing nucleotide cycle form the mechanistic basis for DNA recombination by continuous HJ branch migration. Branch migration allows RuvC to scan DNA until it finds its consensus sequence, where it cleaves and resolves cruciform DNA. In Sinorhizobium medicae (strain WSM419) (Ensifer medicae), this protein is Holliday junction branch migration complex subunit RuvB.